The sequence spans 244 residues: tRNA pseudouridine synthase A (244 aa).

Aspartate 52 acts as the Nucleophile in catalysis. Tyrosine 110 lines the substrate pocket.

This sequence belongs to the tRNA pseudouridine synthase TruA family. In terms of assembly, homodimer.

It catalyses the reaction uridine(38/39/40) in tRNA = pseudouridine(38/39/40) in tRNA. Its function is as follows. Formation of pseudouridine at positions 38, 39 and 40 in the anticodon stem and loop of transfer RNAs. This chain is tRNA pseudouridine synthase A, found in Geobacter sulfurreducens (strain ATCC 51573 / DSM 12127 / PCA).